Here is a 166-residue protein sequence, read N- to C-terminus: Small ribosomal subunit protein uS5 (166 aa).

Residues 11–74 (LQEKLIAVNR…EKARRNMINV (64 aa)) enclose the S5 DRBM domain.

It belongs to the universal ribosomal protein uS5 family. As to quaternary structure, part of the 30S ribosomal subunit. Contacts proteins S4 and S8.

Functionally, with S4 and S12 plays an important role in translational accuracy. In terms of biological role, located at the back of the 30S subunit body where it stabilizes the conformation of the head with respect to the body. This chain is Small ribosomal subunit protein uS5, found in Haemophilus ducreyi (strain 35000HP / ATCC 700724).